The primary structure comprises 117 residues: MSLDAVGSLETKGFPGVLAAADAMVKTGRVTLVGYIRAGSARFTIIIRGDVSEVKTAMDAGIHAVDKAYGAALETWVIIPRPHENVECVLPIAYNENVERFRESTERPLIGSSQNRS.

Positions 5–91 (AVGSLETKGF…PHENVECVLP (87 aa)) constitute a BMC domain.

This sequence belongs to the bacterial microcompartments protein family. CcmK subfamily. Crystallizes as a homohexamer. Interacts stably with CcmK3, forming heterohexamers that can make dodecamers. Heterohexamers have a 1:2 CcmK3:CcmK4 stoichiometry. Upon expression in E.coli forms large aggregates.

It localises to the carboxysome. Its function is as follows. A probably essential, minor shell protein of the carboxysome, a polyhedral inclusion where RuBisCO (ribulose bisphosphate carboxylase, rbcL-rbcS) is sequestered. Hexamers form sheets that form the facets of the polyhedral carboxysome. In PCC 7418 there are several CcmK paralogs with presumably functional differences. This subunit can probably make both homohexamers and heterohexamers with CcmK3. Both hexamers can also make dodecamers, formation depends on buffer conditions. This chain is Carboxysome shell protein CcmK4, found in Halothece sp. (strain PCC 7418) (Synechococcus sp. (strain PCC 7418)).